The chain runs to 286 residues: Prepilin leader peptidase/N-methyltransferase (286 aa).

A helical transmembrane segment spans residues 10–30 (FAVPLAAVLGLLVGSFLNVVI). The Zn(2+) site is built by C70, C73, C95, and C98. Helical transmembrane passes span 102 to 122 (ISIRYPLIELLTGVLFGLVAW), 126 to 146 (WSWITLGGLILTAFLISLTFI), 157 to 177 (MTLPLIWLGLIFNLDGGFVPL), 181 to 201 (VLGAVAGYSSLWLLCAVYKLL), 224 to 244 (ISALPVLIFVSSLIGLVAAIV), and 250 to 270 (GRHFAFGPALTVSGWIIFTAN).

The protein belongs to the peptidase A24 family. The cofactor is Zn(2+).

It localises to the cell inner membrane. It catalyses the reaction Typically cleaves a -Gly-|-Phe- bond to release an N-terminal, basic peptide of 5-8 residues from type IV prepilin, and then N-methylates the new N-terminal amino group, the methyl donor being S-adenosyl-L-methionine.. Its function is as follows. Plays an essential role in type IV pili and type II pseudopili formation by proteolytically removing the leader sequence from substrate proteins and subsequently monomethylating the alpha-amino group of the newly exposed N-terminal phenylalanine. The chain is Prepilin leader peptidase/N-methyltransferase (pilD) from Neisseria gonorrhoeae.